Reading from the N-terminus, the 399-residue chain is Zinc finger HIT domain-containing protein 2 (399 aa).

Met-1 bears the N-acetylmethionine mark. Residues Cys-7, Cys-10, Cys-22, Cys-25, Cys-30, Cys-34, His-38, and Cys-41 each contribute to the Zn(2+) site. The segment at 7 to 41 (CGFCPAGEALPARYTCPRCNAPYCSLRCYRAHGAC) adopts an HIT-type zinc-finger fold. 2 disordered regions span residues 70–97 (RLRE…GLSG) and 152–175 (AEPE…AEPF). Gly residues predominate over residues 86-96 (LGPGARPGGLS). At Thr-161 the chain carries Phosphothreonine.

As to quaternary structure, interacts (via HIT-type zinc finger) with RUVBL2 in the presence of ATP or ADP; shows a stronger interaction in the presence of ADP. As to expression, low expression in most tissues; highly expressed in testis; particularly in seminiferous tubules.

In terms of biological role, may act as a bridging factor mediating the interaction between the R2TP/Prefoldin-like (R2TP/PFDL) complex and U5 small nuclear ribonucleoprotein (U5 snRNP). Required for the interaction of R2TP complex subunit RPAP3 and prefoldin-like subunit URI1 with U5 snRNP proteins EFTUD2 and PRPF8. May play a role in regulating the composition of the U5 snRNP complex. In Mus musculus (Mouse), this protein is Zinc finger HIT domain-containing protein 2 (Znhit2).